The chain runs to 457 residues: PDZ and LIM domain protein 7 (457 aa).

Positions 1-85 (MDSFKVVLEG…RLSLGLSRAQ (85 aa)) constitute a PDZ domain. S78 is modified (phosphoserine). Disordered stretches follow at residues 81-132 (LSRA…LSQN) and 186-226 (FMKK…PWAV). T96 carries the post-translational modification Phosphothreonine. Position 103 is an asymmetric dimethylarginine (R103). Phosphoserine is present on S111. S247 bears the Phosphoserine mark. 3 LIM zinc-binding domains span residues 280–338 (PVCH…VRYA), 339–398 (PSCA…MFGT), and 399–457 (KCRG…FSHV).

In terms of assembly, binds via its LIM zinc-binding 3 domain (LIM 3) domain to endocytic codes of INSR, but not with those of IGF1R, LDLR, TFRC, or EGFR. Interacts with various PKC isoforms through the LIM zinc-binding domains. Binds to RET in a phosphorylation-independent manner via its LIM zinc-binding 2 domain (LIM 2). Probably part of a complex with SHC and the RET dimer. Interacts with TPM2, TBX4 and TBX5. Interacts (via LIM domains) with SIPA1L1. In terms of tissue distribution, expressed in kidney, heart, brain, lung, and skeletal muscle. Overexpression results in the synthesis of an unidentified soluble factor which acts on cells in the osteoblast lineage causing them to differentiate and secrete BMP-2.

It localises to the cytoplasm. Its subcellular location is the cytoskeleton. Functionally, may function as a scaffold on which the coordinated assembly of proteins can occur. May play a role as an adapter that, via its PDZ domain, localizes LIM-binding proteins to actin filaments of both skeletal muscle and nonmuscle tissues. Involved in both of the two fundamental mechanisms of bone formation, direct bone formation (e.g. embryonic flat bones mandible and cranium), and endochondral bone formation (e.g. embryonic long bone development). Plays a role during fracture repair. Involved in BMP6 signaling pathway. This is PDZ and LIM domain protein 7 (Pdlim7) from Rattus norvegicus (Rat).